Consider the following 110-residue polypeptide: Large ribosomal subunit protein eL34 (110 aa).

The interval 1–41 (MKNVLIHKGATYKTRSNRRRKVRTPSGKLVNRRVKKHSKKH) is disordered. Over residues 30 to 41 (VNRRVKKHSKKH) the composition is skewed to basic residues.

The protein belongs to the eukaryotic ribosomal protein eL34 family.

The protein is Large ribosomal subunit protein eL34 (RPL34) of Encephalitozoon cuniculi (strain GB-M1) (Microsporidian parasite).